The sequence spans 513 residues: ATP synthase subunit alpha (513 aa).

169 to 176 contributes to the ATP binding site; the sequence is GDRQTGKT.

It belongs to the ATPase alpha/beta chains family. In terms of assembly, F-type ATPases have 2 components, CF(1) - the catalytic core - and CF(0) - the membrane proton channel. CF(1) has five subunits: alpha(3), beta(3), gamma(1), delta(1), epsilon(1). CF(0) has three main subunits: a(1), b(2) and c(9-12). The alpha and beta chains form an alternating ring which encloses part of the gamma chain. CF(1) is attached to CF(0) by a central stalk formed by the gamma and epsilon chains, while a peripheral stalk is formed by the delta and b chains.

The protein localises to the cell inner membrane. It carries out the reaction ATP + H2O + 4 H(+)(in) = ADP + phosphate + 5 H(+)(out). Its function is as follows. Produces ATP from ADP in the presence of a proton gradient across the membrane. The alpha chain is a regulatory subunit. The chain is ATP synthase subunit alpha from Actinobacillus pleuropneumoniae serotype 3 (strain JL03).